The sequence spans 301 residues: 2-phosphoglycerate kinase (301 aa).

One can recognise an ATP-cone domain in the interval 2–89 (IRVIEKGDKV…FWRRFRKMKV (88 aa)).

It belongs to the 2-phosphoglycerate kinase family. A divalent metal cation serves as cofactor.

The enzyme catalyses (2R)-2-phosphoglycerate + ATP = (2R)-2,3-bisphosphoglycerate + ADP + H(+). It functions in the pathway thermoadapter biosynthesis; cyclic 2,3-diphosphoglycerate biosynthesis; cyclic 2,3-diphosphoglycerate from 2-phospho-D-glycerate: step 1/2. In terms of biological role, catalyzes the phosphorylation of 2-phosphoglycerate to 2,3-diphosphoglycerate. Involved in the biosynthesis of cyclic 2,3-bisphosphoglycerate, a thermoprotectant. The polypeptide is 2-phosphoglycerate kinase (Pyrococcus horikoshii (strain ATCC 700860 / DSM 12428 / JCM 9974 / NBRC 100139 / OT-3)).